The primary structure comprises 203 residues: Dephospho-CoA kinase (203 aa).

Positions 3–201 (SVGLTGGIGS…QRYLECAAAA (199 aa)) constitute a DPCK domain. ATP is bound at residue 11–16 (GSGKTT).

Belongs to the CoaE family.

The protein resides in the cytoplasm. It carries out the reaction 3'-dephospho-CoA + ATP = ADP + CoA + H(+). The protein operates within cofactor biosynthesis; coenzyme A biosynthesis; CoA from (R)-pantothenate: step 5/5. Functionally, catalyzes the phosphorylation of the 3'-hydroxyl group of dephosphocoenzyme A to form coenzyme A. The chain is Dephospho-CoA kinase from Burkholderia pseudomallei (strain 1710b).